Here is a 296-residue protein sequence, read N- to C-terminus: Ribonuclease HIII (296 aa).

The 217-residue stretch at 80 to 296 (LALIGSDEVG…NTKKAYQRLK (217 aa)) folds into the RNase H type-2 domain. Asp-86, Glu-87, and Asp-191 together coordinate a divalent metal cation.

The protein belongs to the RNase HII family. RnhC subfamily. It depends on Mn(2+) as a cofactor. Mg(2+) is required as a cofactor.

The protein resides in the cytoplasm. The catalysed reaction is Endonucleolytic cleavage to 5'-phosphomonoester.. Functionally, endonuclease that specifically degrades the RNA of RNA-DNA hybrids. The protein is Ribonuclease HIII of Streptococcus thermophilus (strain ATCC BAA-250 / LMG 18311).